Here is a 270-residue protein sequence, read N- to C-terminus: Myelin protein zero-like protein 1 (270 aa).

Positions 1–35 (MAEAVGAVTLIAAPARRRWLWSALAAMLGLLTARI) are cleaved as a signal peptide. One can recognise an Ig-like V-type domain in the interval 36 to 151 (SALEVHTPKE…DIVVRPGQIR (116 aa)). The Extracellular segment spans residues 36-162 (SALEVHTPKE…HVVEIDNLLV (127 aa)). Residues Asn-50 and Asn-130 are each glycosylated (N-linked (GlcNAc...) asparagine). The cysteines at positions 58 and 135 are disulfide-linked. A helical membrane pass occupies residues 163–183 (FLVWVVVGTVTAVVLGLTLLI). At 184–270 (SLVLVVLYRR…SVVYADIRKD (87 aa)) the chain is on the cytoplasmic side. The disordered stretch occupies residues 201-257 (TGCSTSERLSPVKQAPRKCPSDTEGLVKSPPSAGSHQGPVIYAQLDHSGGHHSGKIN). A phosphoserine mark is found at Ser-204, Ser-206, Ser-210, and Ser-221. Residues 240–245 (VIYAQL) carry the ITIM motif 1 motif. Phosphotyrosine is present on Tyr-242. Ser-261 carries the post-translational modification Phosphoserine. An ITIM motif 2 motif is present at residues 262–267 (VVYADI). At Tyr-264 the chain carries Phosphotyrosine.

Belongs to the myelin P0 protein family. In terms of assembly, interacts with phosphorylated PTPN11/SHP-2. In terms of processing, phosphorylated on tyrosine residues upon stimulation with pervanadate and concanavalin-A (ConA). Phosphorylation at Tyr-242 and Tyr-264 is required for interaction with PTPN11/SHP-2. Dephosphorylated by PTPN11/SHP-2 (in vitro). Post-translationally, N-glycosylated.

The protein localises to the membrane. In terms of biological role, cell surface receptor, which is involved in signal transduction processes. Recruits PTPN11/SHP-2 to the cell membrane and is a putative substrate of PTPN11/SHP-2. Is a major receptor for concanavalin-A (ConA) and is involved in cellular signaling induced by ConA, which probably includes Src family tyrosine-protein kinases. May be involved in regulation of integrin-mediated cell motility. In Rattus norvegicus (Rat), this protein is Myelin protein zero-like protein 1 (Mpzl1).